The primary structure comprises 337 residues: Glyceraldehyde-3-phosphate dehydrogenase 1, cytosolic (337 aa).

Residues 13–14 (RI), Asp-35, and Arg-82 contribute to the NAD(+) site. D-glyceraldehyde 3-phosphate is bound by residues 153 to 155 (SCT), Thr-184, 213 to 214 (TG), and Arg-236. Cys-154 acts as the Nucleophile in catalysis. NAD(+) is bound at residue Asn-318.

The protein belongs to the glyceraldehyde-3-phosphate dehydrogenase family. As to quaternary structure, homotetramer.

The protein localises to the cytoplasm. It catalyses the reaction D-glyceraldehyde 3-phosphate + phosphate + NAD(+) = (2R)-3-phospho-glyceroyl phosphate + NADH + H(+). It functions in the pathway carbohydrate degradation; glycolysis; pyruvate from D-glyceraldehyde 3-phosphate: step 1/5. Key enzyme in glycolysis that catalyzes the first step of the pathway by converting D-glyceraldehyde 3-phosphate (G3P) into 3-phospho-D-glyceroyl phosphate. Essential for the maintenance of cellular ATP levels and carbohydrate metabolism. The protein is Glyceraldehyde-3-phosphate dehydrogenase 1, cytosolic (GAPC) of Hordeum vulgare (Barley).